Here is a 248-residue protein sequence, read N- to C-terminus: 4-hydroxy-tetrahydrodipicolinate reductase (248 aa).

NAD(+)-binding positions include aspartate 32, 74 to 76 (GTT), and 99 to 102 (SANF). The Proton donor/acceptor role is filled by histidine 134. Histidine 135 serves as a coordination point for (S)-2,3,4,5-tetrahydrodipicolinate. The Proton donor role is filled by lysine 138. 144 to 145 (GT) is a (S)-2,3,4,5-tetrahydrodipicolinate binding site.

This sequence belongs to the DapB family.

The protein localises to the cytoplasm. It catalyses the reaction (S)-2,3,4,5-tetrahydrodipicolinate + NAD(+) + H2O = (2S,4S)-4-hydroxy-2,3,4,5-tetrahydrodipicolinate + NADH + H(+). The enzyme catalyses (S)-2,3,4,5-tetrahydrodipicolinate + NADP(+) + H2O = (2S,4S)-4-hydroxy-2,3,4,5-tetrahydrodipicolinate + NADPH + H(+). The protein operates within amino-acid biosynthesis; L-lysine biosynthesis via DAP pathway; (S)-tetrahydrodipicolinate from L-aspartate: step 4/4. Functionally, catalyzes the conversion of 4-hydroxy-tetrahydrodipicolinate (HTPA) to tetrahydrodipicolinate. The protein is 4-hydroxy-tetrahydrodipicolinate reductase of Chlorobium limicola (strain DSM 245 / NBRC 103803 / 6330).